Reading from the N-terminus, the 293-residue chain is Plant cysteine oxidase 1 (293 aa).

H148, H150, and H211 together coordinate Fe cation. The disordered stretch occupies residues 250-293; sequence SEDDDVLSSEEEKEGYAWLQERDDNPEDHTNVVGALYRGPKVED. Acidic residues predominate over residues 251–262; the sequence is EDDDVLSSEEEK. The span at 269–279 shows a compositional bias: basic and acidic residues; the sequence is QERDDNPEDHT.

Belongs to the cysteine dioxygenase family. The cofactor is Fe(2+).

The protein resides in the nucleus. It localises to the cytoplasm. The catalysed reaction is L-cysteine + O2 = 3-sulfino-L-alanine + H(+). Catalyzes the oxidation of N-terminal cysteine residues (N-Cys), thus preparing the protein for N-end rule pathway-mediated proteasomal degradation, upstream of the N-end rule enzymes ATE1, ATE2 and PRT6. Controls the preparation of the group VII ethylene response factor (ERF-VII) proteins for degradation via the 26S proteasome N-end rule pathway. Acts as an oxygen sensor that controls the stability of ERF-VII proteins, which are stabilized in flooding-induced hypoxia, and regulate transcriptional adaptation to these adverse conditions. Not active on Cys located inside or at the C-terminus of a peptide. Acts redundantly with PCO2 to repress the anaerobic response. The chain is Plant cysteine oxidase 1 from Arabidopsis thaliana (Mouse-ear cress).